Consider the following 413-residue polypeptide: MAP kinase-interacting serine/threonine-protein kinase 1 (413 aa).

A disordered region spans residues 1–26 (MGSSEPLPIVDSDKRRKKKRKTRATD). Thr22 bears the Phosphothreonine; by PAK2 mark. At Ser27 the chain carries Phosphoserine; by PAK2. The Protein kinase domain occupies 37-321 (QLTSELLGEG…AAQVLQHPWV (285 aa)). ATP-binding positions include 43 to 51 (LGEGAYAKV) and Lys66. Asp158 acts as the Proton acceptor in catalysis. A phosphoserine mark is found at Ser168 and Ser173. A phosphothreonine mark is found at Thr197, Thr202, and Thr332.

This sequence belongs to the protein kinase superfamily. CAMK Ser/Thr protein kinase family. In terms of assembly, interacts with the C-terminal regions of EIF4G1 and EIF4G2. Also binds to dephosphorylated ERK1 and ERK2, and to the p38 kinases. Mg(2+) is required as a cofactor. Dual phosphorylation of Thr-197 and Thr-202 activates the kinase. Phosphorylation of Thr-332 activates the kinase. MAPK3/ERK1 is one of the kinases which activate MKNK1/MNK1. Phosphorylation by PAK2 leads to a reduced phosphorylation of EIF4G1.

It catalyses the reaction L-seryl-[protein] + ATP = O-phospho-L-seryl-[protein] + ADP + H(+). The catalysed reaction is L-threonyl-[protein] + ATP = O-phospho-L-threonyl-[protein] + ADP + H(+). Its activity is regulated as follows. Phosphorylated and activated by the p38 kinases and kinases in the Erk pathway. Functionally, may play a role in the response to environmental stress and cytokines. Appears to regulate translation by phosphorylating EIF4E, thus increasing the affinity of this protein for the 7-methylguanosine-containing mRNA cap. The sequence is that of MAP kinase-interacting serine/threonine-protein kinase 1 (Mknk1) from Rattus norvegicus (Rat).